The chain runs to 533 residues: Malate synthase A (533 aa).

Arg-166 (proton acceptor) is an active-site residue. The Proton donor role is filled by Asp-447.

Belongs to the malate synthase family.

It localises to the cytoplasm. It catalyses the reaction glyoxylate + acetyl-CoA + H2O = (S)-malate + CoA + H(+). It participates in carbohydrate metabolism; glyoxylate cycle; (S)-malate from isocitrate: step 2/2. This chain is Malate synthase A (aceB), found in Escherichia coli (strain K12).